Here is a 236-residue protein sequence, read N- to C-terminus: 3-deoxy-D-manno-octulosonic acid kinase (236 aa).

Residue D167 is part of the active site.

It belongs to the protein kinase superfamily. KdkA/RfaP family.

The protein resides in the cell inner membrane. The catalysed reaction is an alpha-Kdo-(2-&gt;6)-lipid IVA + ATP = a 4-O-phospho-alpha-Kdo-(2-&gt;6)-lipid IVA + ADP + H(+). Its pathway is bacterial outer membrane biogenesis; LPS core biosynthesis. Functionally, catalyzes the ATP-dependent phosphorylation of the 3-deoxy-D-manno-octulosonic acid (Kdo) residue in Kdo-lipid IV(A) at the 4-OH position. The chain is 3-deoxy-D-manno-octulosonic acid kinase from Vibrio vulnificus (strain CMCP6).